The chain runs to 240 residues: Purine nucleoside phosphorylase RC0672 (240 aa).

Zn(2+) is bound by residues H60, C96, and H113.

The protein belongs to the purine nucleoside phosphorylase YfiH/LACC1 family. As to quaternary structure, homodimer. Requires Cu(2+) as cofactor. It depends on Zn(2+) as a cofactor.

It carries out the reaction adenosine + phosphate = alpha-D-ribose 1-phosphate + adenine. The enzyme catalyses S-methyl-5'-thioadenosine + phosphate = 5-(methylsulfanyl)-alpha-D-ribose 1-phosphate + adenine. The catalysed reaction is inosine + phosphate = alpha-D-ribose 1-phosphate + hypoxanthine. It catalyses the reaction adenosine + H2O + H(+) = inosine + NH4(+). Its function is as follows. Purine nucleoside enzyme that catalyzes the phosphorolysis of adenosine and inosine nucleosides, yielding D-ribose 1-phosphate and the respective free bases, adenine and hypoxanthine. Also catalyzes the phosphorolysis of S-methyl-5'-thioadenosine into adenine and S-methyl-5-thio-alpha-D-ribose 1-phosphate. Also has adenosine deaminase activity. This chain is Purine nucleoside phosphorylase RC0672, found in Rickettsia conorii (strain ATCC VR-613 / Malish 7).